Reading from the N-terminus, the 679-residue chain is MADSHGDTGATMPEAAAQEASVFSMTDVVLFSLIVGLITYWFLFRKKKEEVPEFTKIQAPTSSSVKESSFVEKMKKTGRNIVVFYGSQTGTAEEFANRLSKDAHRYGMRGMAADPEEYDLADLSSLPEINNALAVFCMATYGEGDPTDNAQDFYDWLQETDVDLSGVKYAVFGLGNKTYEHFNAMGKYVDQRLEQLGAQRIFELGMGDDDANLEEDFITWREQFWPAVCEHFGVEATGEESSIRQYELVLHTDIDVAKVYQGEMGRLKSYENQKPPFDAKNPFLATVTTNRKLNQGTERHLMHLELDISDSKIRYESGDHVAVYPANDSALVNQLGEILGADLDVVMSLNNLDEESNKKHPFPCPTSYRTALTYYLDITNPPRTNVLYELAQYAADPAEQEQLRKMASSSGEGKELYLSWVVEARRHILAILQDYPSLRPPIDHLCELLPRLQARYYSIASSSKVHPNSVHICAVAVEYETKAGRLNKGVATSWLRAKEPAGENGGRALVPMFVRKSQFRLPFKATTPVIMVGPGTGVAPFIGFIQERAWLRQQGKEVGETLLYYGCRRAAEDYLYREELAGFQKDGTLSQLNVAFSREQAQKVYVQHLLRRDKEHLWRLIHEGGAHIYVCGDARNMARDVQNTFYDIVAELGAMEHAQAVDYVKKLMTKGRYSLDVWS.

Over 1 to 21 (MADSHGDTGATMPEAAAQEAS) the chain is Lumenal. Residues 22-42 (VFSMTDVVLFSLIVGLITYWF) form a helical membrane-spanning segment. Residues 43 to 679 (LFRKKKEEVP…KGRYSLDVWS (637 aa)) lie on the Cytoplasmic side of the membrane. Ser-64 is modified (phosphoserine). In terms of domain architecture, Flavodoxin-like spans 81–225 (IVVFYGSQTG…DFITWREQFW (145 aa)). FMN contacts are provided by residues 87–92 (SQTGTA), 139–142 (ATYG), 174–183 (LGNKTYEHFN), and Asp-209. Residues 280 to 522 (KNPFLATVTT…FVRKSQFRLP (243 aa)) enclose the FAD-binding FR-type domain. Residue Arg-299 participates in NADP(+) binding. FAD-binding positions include Arg-425, 455 to 458 (RYYS), 473 to 475 (CAV), Tyr-479, and 489 to 492 (GVAT). NADP(+) is bound by residues Thr-536, 597-598 (SR), 603-607 (KVYVQ), and Asp-640. Trp-678 provides a ligand contact to FAD.

This sequence belongs to the NADPH--cytochrome P450 reductase family. In the N-terminal section; belongs to the flavodoxin family. It in the C-terminal section; belongs to the flavoprotein pyridine nucleotide cytochrome reductase family. FAD is required as a cofactor. FMN serves as cofactor.

Its subcellular location is the endoplasmic reticulum membrane. It carries out the reaction 2 oxidized [cytochrome P450] + NADPH = 2 reduced [cytochrome P450] + NADP(+) + H(+). Functionally, this enzyme is required for electron transfer from NADP to cytochrome P450 in microsomes. It can also provide electron transfer to heme oxygenase and cytochrome B5. The protein is NADPH--cytochrome P450 reductase of Oryctolagus cuniculus (Rabbit).